We begin with the raw amino-acid sequence, 948 residues long: MDSWLEYDDIINQDIDIPSNDLSGSGTLCVGVHSSLLENSLNSIDSFISSKEEISWCGNQSTPIATKSHLSCINPQYVNPFDTSPVSVDTEFQDTYLLDAPSFAQPHFSERQSVDKTRSRCLSRNRRRKRHPNLHKNHQRLLGMSFPQDGFRRMPAESVNFSYFRDTGFNEPTIFPSSDTQNTRQLNLSKIATLIGYDCPLALVDVVTQKQIPNKMDMESWVKYMSLEPSKRGRIYDVLSLEVSTTKLAYYVRKPNIVRDLDLVNTVWPPGSFALGEYPHVDTYCLMSAENSYTEFHIEFGGSSAYYNILDGCKIFYLIPGTSKNWEAYTAWLTSSNDSDKKFLPNMVDVCYCVEVHSQQTILVPSGWIYAVVTPCDTISIAGNFLTFLHIYPQLSIYNLELQLGIEKEYQYPYFESIMWYTAIHFYLAFPDNSSRDGIDDIIAEYETGRLFDINAFTEQELDGFEELLNYLYIRAQILRDCDIIIDIYNEPVKISKNNGYNSAYTMVPPDLDEICVDFVQKFGAWITYHHRRSAKHPSCNCFSHLQTKLIDSGPKPANNSYQHQSNFIGVVISTNHNIIKKCQESQIQTGKNNCSFQLVKKRIKSTKKAPSWRSIIKAFKKRENTRCNFLSSLHATTFREDIVVRPKIKSFVLEQLIFQALFSFAINWTPSFFLNHSNFENIALSKETFNFGGEANCENTDTTLFTTWGDQGFRPSDSICYNDFNLLETANSDAEASIHELELQPLNAVNEREVDISQTDMTPSTALDTRVDTRVDSLPEFSNLILSPSSNDDSFQLDDLLSPSSSNLKQQIQKVVPQNSLEFSVGEKEKKAAEYSLLHTFSYKRLSMENEKPDTTKVPLKYNIQHEEMKAYRRKNDLEYIDQHFASSKSGISNGRNNNKEVNLTKAENVGIKKRRIMKNENNIYDFEDHSPVREKWGHRLRSRGAS.

Residues valine 243–leucine 402 enclose the JmjC domain. Threonine 294 serves as a coordination point for substrate. Residues histidine 297 and glutamate 299 each contribute to the Fe cation site. Lysine 314 serves as a coordination point for substrate.

The protein belongs to the JHDM1 histone demethylase family. Requires Fe(2+) as cofactor.

It is found in the nucleus. The enzyme catalyses N(6),N(6)-dimethyl-L-lysyl(36)-[histone H3] + 2 2-oxoglutarate + 2 O2 = L-lysyl(36)-[histone H3] + 2 formaldehyde + 2 succinate + 2 CO2. May be a histone demethylase that specifically demethylates 'Lys-36' of histone H3, thereby playing a central role in histone code. Represses transcriptional silencing by negatively affecting heterochromatin stability. This Schizosaccharomyces pombe (strain 972 / ATCC 24843) (Fission yeast) protein is Putative JmjC domain-containing histone demethylation protein 1 (jhd1).